Reading from the N-terminus, the 215-residue chain is Probable phosphoglycerate mutase GpmB (215 aa).

Substrate-binding positions include 8–15 (RHGETQWN), 21–22 (QG), R58, R60, 82–85 (ELNM), 104–105 (RR), and 151–152 (GI). Catalysis depends on H9, which acts as the Tele-phosphohistidine intermediate. The active-site Proton donor/acceptor is the E82.

It belongs to the phosphoglycerate mutase family. GpmB subfamily.

It carries out the reaction (2R)-2-phosphoglycerate = (2R)-3-phosphoglycerate. Its pathway is carbohydrate degradation; glycolysis; pyruvate from D-glyceraldehyde 3-phosphate: step 3/5. This chain is Probable phosphoglycerate mutase GpmB, found in Escherichia fergusonii (strain ATCC 35469 / DSM 13698 / CCUG 18766 / IAM 14443 / JCM 21226 / LMG 7866 / NBRC 102419 / NCTC 12128 / CDC 0568-73).